Consider the following 273-residue polypeptide: WIMGHMVNAIAQIDEFVNLGANSIETDVSFDSSANPEYTYHGVPCDCGRTCTKWEHFNEFLKGLRKATTPGDSKYHEKLVLVVFDLKTGSLYDNQASDAGKKLAKSLLQNYWNNGNNGGRAYIVLSIPNLAHYKLITGFKEALTSEGHPELMDKVGYDFSGNDDIGDVANAYKKAGVTGHVWQSDGITNCLLRGLDRVRKAVANRDSSSGYINKVYYWTVDKRQSTRDALDAGVDGIMTNYPDVIADVLNESAYKAKFRIASYDDNPWETFKN.

The active site involves His-5. Mg(2+) is bound by residues Glu-25 and Asp-27. His-41 serves as the catalytic Nucleophile. Cystine bridges form between Cys-45-Cys-51 and Cys-47-Cys-190. Asp-85 is a binding site for Mg(2+). N-linked (GlcNAc...) asparagine glycosylation is present at Asn-250.

Belongs to the arthropod phospholipase D family. Class II subfamily. It depends on Mg(2+) as a cofactor. Expressed by the venom gland.

Its subcellular location is the secreted. It catalyses the reaction an N-(acyl)-sphingosylphosphocholine = an N-(acyl)-sphingosyl-1,3-cyclic phosphate + choline. The enzyme catalyses an N-(acyl)-sphingosylphosphoethanolamine = an N-(acyl)-sphingosyl-1,3-cyclic phosphate + ethanolamine. It carries out the reaction a 1-acyl-sn-glycero-3-phosphocholine = a 1-acyl-sn-glycero-2,3-cyclic phosphate + choline. The catalysed reaction is a 1-acyl-sn-glycero-3-phosphoethanolamine = a 1-acyl-sn-glycero-2,3-cyclic phosphate + ethanolamine. Its function is as follows. Dermonecrotic toxins cleave the phosphodiester linkage between the phosphate and headgroup of certain phospholipids (sphingolipid and lysolipid substrates), forming an alcohol (often choline) and a cyclic phosphate. This toxin acts on sphingomyelin (SM). It may also act on ceramide phosphoethanolamine (CPE), lysophosphatidylcholine (LPC) and lysophosphatidylethanolamine (LPE), but not on lysophosphatidylserine (LPS), and lysophosphatidylglycerol (LPG). It acts by transphosphatidylation, releasing exclusively cyclic phosphate products as second products. Induces dermonecrosis, hemolysis, increased vascular permeability, edema, inflammatory response, and platelet aggregation. The sequence is that of Dermonecrotic toxin LapSicTox-alphaIB1aiv from Loxosceles apachea (Apache recluse spider).